The primary structure comprises 447 residues: UPF0210 protein LAF_0976 (447 aa).

This sequence belongs to the UPF0210 family. Homodimer.

The polypeptide is UPF0210 protein LAF_0976 (Limosilactobacillus fermentum (strain NBRC 3956 / LMG 18251) (Lactobacillus fermentum)).